The following is a 520-amino-acid chain: Beta-glucosidase 45 (520 aa).

The first 22 residues, 1–22 (MKNLTSFVIVILLQSLLFHVYG), serve as a signal peptide directing secretion. The N-linked (GlcNAc...) asparagine glycan is linked to Asn-3. Residues Gln-52, His-155, and 200–201 (NE) contribute to the a beta-D-glucoside site. Glu-201 (proton donor) is an active-site residue. Residues Cys-220 and Cys-227 are joined by a disulfide bond. Asn-226 carries an N-linked (GlcNAc...) asparagine glycan. Tyr-344 is an a beta-D-glucoside binding site. Cys-352 and Cys-357 are oxidised to a cystine. An N-linked (GlcNAc...) asparagine glycan is attached at Asn-378. Residue Glu-417 coordinates a beta-D-glucoside. Glu-417 acts as the Nucleophile in catalysis. Asn-435 is a glycosylation site (N-linked (GlcNAc...) asparagine). A beta-D-glucoside-binding positions include Trp-466, 473 to 474 (EW), and Phe-482.

The protein belongs to the glycosyl hydrolase 1 family. Expressed in stems and siliques.

It catalyses the reaction Hydrolysis of terminal, non-reducing beta-D-glucosyl residues with release of beta-D-glucose.. In terms of biological role, hydrolyzes p-nitrophenyl beta-D-glucoside and natural glucosides such as syringin, coniferin and p-coumaryl alcohol glucoside. May be involved in lignification by hydrolyzing monolignol glucosides. This chain is Beta-glucosidase 45, found in Arabidopsis thaliana (Mouse-ear cress).